The chain runs to 179 residues: Translation initiation factor IF-3 (179 aa).

The protein belongs to the IF-3 family. In terms of assembly, monomer.

The protein resides in the cytoplasm. Its function is as follows. IF-3 binds to the 30S ribosomal subunit and shifts the equilibrium between 70S ribosomes and their 50S and 30S subunits in favor of the free subunits, thus enhancing the availability of 30S subunits on which protein synthesis initiation begins. The protein is Translation initiation factor IF-3 of Buchnera aphidicola subsp. Acyrthosiphon pisum (strain APS) (Acyrthosiphon pisum symbiotic bacterium).